Consider the following 415-residue polypeptide: MFERSRFTIDQIDPEVFAAIQQENQRQEDHIELIASENYTSPAVMAAQGSQLTNKYAEGYPGKRYYGGCEYVDIVEQLAIDRVKQLFGAEAANVQPNSGSQANQGVYFAVLKPGDTIMGMSLAEGGHLTHGMALNMSGKWFNVVSYGLNAQEDIDYDALEKLAQEKKPKLIIAGASAFALRIDFERIGKVAKSIGAYFMVDMAHYAGLIAAGVYPNPVPHADFVTTTTHKSLRGPRGGVILMKAEHEKAINSSIFPGIQGGPLMHVIAGKAVAFKEALTPEFKAYQQQVVKNAAVLAETLIARGLRIVSGRTESHVMLVDLRAKNITGKEAERILGEAHLTVNKNAIPNDPEKPFVTSGIRVGSPAMTTRGFKEEEARIVGNLIADVLDNPHDAANIAAVREQVSALTKRFPVYG.

(6S)-5,6,7,8-tetrahydrofolate-binding positions include L122 and 126–128 (GHL). N6-(pyridoxal phosphate)lysine is present on K230.

This sequence belongs to the SHMT family. Homodimer. Pyridoxal 5'-phosphate serves as cofactor.

Its subcellular location is the cytoplasm. It catalyses the reaction (6R)-5,10-methylene-5,6,7,8-tetrahydrofolate + glycine + H2O = (6S)-5,6,7,8-tetrahydrofolate + L-serine. It functions in the pathway one-carbon metabolism; tetrahydrofolate interconversion. The protein operates within amino-acid biosynthesis; glycine biosynthesis; glycine from L-serine: step 1/1. In terms of biological role, catalyzes the reversible interconversion of serine and glycine with tetrahydrofolate (THF) serving as the one-carbon carrier. This reaction serves as the major source of one-carbon groups required for the biosynthesis of purines, thymidylate, methionine, and other important biomolecules. Also exhibits THF-independent aldolase activity toward beta-hydroxyamino acids, producing glycine and aldehydes, via a retro-aldol mechanism. The sequence is that of Serine hydroxymethyltransferase from Cupriavidus taiwanensis (strain DSM 17343 / BCRC 17206 / CCUG 44338 / CIP 107171 / LMG 19424 / R1) (Ralstonia taiwanensis (strain LMG 19424)).